We begin with the raw amino-acid sequence, 755 residues long: Elongation factor G, mitochondrial (755 aa).

The transit peptide at 1 to 38 (MFKRVGLIAGIAGPVAGSSRFSAVSFSKRAFSASSKRC) directs the protein to the mitochondrion. The tr-type G domain maps to 63 to 344 (KKLRNIGISA…AIVEYLPNPS (282 aa)). Residues 72–79 (AHIDSGKT), 143–147 (DTPGH), and 197–200 (NKMD) each bind GTP.

This sequence belongs to the TRAFAC class translation factor GTPase superfamily. Classic translation factor GTPase family. EF-G/EF-2 subfamily.

It localises to the mitochondrion. Its pathway is protein biosynthesis; polypeptide chain elongation. Functionally, mitochondrial GTPase that catalyzes the GTP-dependent ribosomal translocation step during translation elongation. During this step, the ribosome changes from the pre-translocational (PRE) to the post-translocational (POST) state as the newly formed A-site-bound peptidyl-tRNA and P-site-bound deacylated tRNA move to the P and E sites, respectively. Catalyzes the coordinated movement of the two tRNA molecules, the mRNA and conformational changes in the ribosome. This Kluyveromyces lactis (strain ATCC 8585 / CBS 2359 / DSM 70799 / NBRC 1267 / NRRL Y-1140 / WM37) (Yeast) protein is Elongation factor G, mitochondrial.